Reading from the N-terminus, the 179-residue chain is Inner membrane-spanning protein YciB (179 aa).

Transmembrane regions (helical) follow at residues 22–42, 50–70, 76–96, 121–141, and 149–169; these read IYAA…YSWV, MALI…FFHN, WKVT…QWVM, LAWA…AFWL, and FKVF…GIYI.

It belongs to the YciB family.

It localises to the cell inner membrane. Plays a role in cell envelope biogenesis, maintenance of cell envelope integrity and membrane homeostasis. The chain is Inner membrane-spanning protein YciB from Shigella dysenteriae serotype 1 (strain Sd197).